Here is a 601-residue protein sequence, read N- to C-terminus: Potassium-transporting ATPase potassium-binding subunit (601 aa).

12 consecutive transmembrane segments (helical) span residues 6 to 26 (IMLL…LGLF), 65 to 85 (SYAI…YAVQ), 136 to 156 (ALTG…FALI), 179 to 199 (LYIL…QGVI), 283 to 303 (FSNF…CFTF), 313 to 333 (GWAV…IVMT), 367 to 387 (FGIS…CGAV), 397 to 417 (MGGF…GGVG), 419 to 439 (GLYG…LMIG), 458 to 478 (SIAI…AVLV), 524 to 544 (MLAI…LAIA), and 566 to 586 (LFVA…YVPA).

This sequence belongs to the KdpA family. In terms of assembly, the system is composed of three essential subunits: KdpA, KdpB and KdpC.

It is found in the cell inner membrane. In terms of biological role, part of the high-affinity ATP-driven potassium transport (or Kdp) system, which catalyzes the hydrolysis of ATP coupled with the electrogenic transport of potassium into the cytoplasm. This subunit binds the periplasmic potassium ions and delivers the ions to the membrane domain of KdpB through an intramembrane tunnel. This is Potassium-transporting ATPase potassium-binding subunit from Herminiimonas arsenicoxydans.